A 255-amino-acid chain; its full sequence is tRNA (guanine-N(1)-)-methyltransferase (255 aa).

S-adenosyl-L-methionine is bound by residues glycine 113 and isoleucine 133–leucine 138.

It belongs to the RNA methyltransferase TrmD family. In terms of assembly, homodimer.

Its subcellular location is the cytoplasm. The catalysed reaction is guanosine(37) in tRNA + S-adenosyl-L-methionine = N(1)-methylguanosine(37) in tRNA + S-adenosyl-L-homocysteine + H(+). Its function is as follows. Specifically methylates guanosine-37 in various tRNAs. This chain is tRNA (guanine-N(1)-)-methyltransferase, found in Salmonella choleraesuis (strain SC-B67).